The following is a 279-amino-acid chain: DegV domain-containing protein CA_C0701 (279 aa).

The DegV domain maps to 4-277 (IKIVTDSTCD…TKACGVFFIE (274 aa)). Hexadecanoate-binding residues include T62 and S94.

Its function is as follows. May bind long-chain fatty acids, such as palmitate, and may play a role in lipid transport or fatty acid metabolism. The chain is DegV domain-containing protein CA_C0701 from Clostridium acetobutylicum (strain ATCC 824 / DSM 792 / JCM 1419 / IAM 19013 / LMG 5710 / NBRC 13948 / NRRL B-527 / VKM B-1787 / 2291 / W).